The sequence spans 139 residues: D-ribose pyranase (139 aa).

Histidine 20 functions as the Proton donor in the catalytic mechanism. Residues aspartate 28, histidine 106, and 128–130 each bind substrate; that span reads YAN.

Belongs to the RbsD / FucU family. RbsD subfamily. Homodecamer.

The protein resides in the cytoplasm. The enzyme catalyses beta-D-ribopyranose = beta-D-ribofuranose. The protein operates within carbohydrate metabolism; D-ribose degradation; D-ribose 5-phosphate from beta-D-ribopyranose: step 1/2. Its function is as follows. Catalyzes the interconversion of beta-pyran and beta-furan forms of D-ribose. The chain is D-ribose pyranase from Actinobacillus succinogenes (strain ATCC 55618 / DSM 22257 / CCUG 43843 / 130Z).